Consider the following 189-residue polypeptide: Protein F29A7.6 (189 aa).

The disordered stretch occupies residues 124 to 161 (KSLGGQKLAALDKKSQSKRERRQQNERNEETTGGRRFN). Residues 133 to 161 (ALDKKSQSKRERRQQNERNEETTGGRRFN) are compositionally biased toward basic and acidic residues.

It belongs to the MPP6 family.

The protein is Protein F29A7.6 of Caenorhabditis elegans.